The following is a 133-amino-acid chain: Vascular endothelial growth factor homolog (133 aa).

Positions 1–20 (MKLLVGILVAVCLHQYLLNA) are cleaved as a signal peptide. Disulfide bonds link C36/C78, C67/C112, and C71/C114. Residue N85 is glycosylated (N-linked (GlcNAc...) asparagine; by host).

The protein belongs to the PDGF/VEGF growth factor family. In terms of assembly, homodimer; disulfide-linked.

It is found in the secreted. In terms of biological role, induces endothelial proliferation. The polypeptide is Vascular endothelial growth factor homolog (Orf virus (strain NZ2) (OV NZ-2)).